The primary structure comprises 122 residues: Protein 7a (122 aa).

An N-terminal signal peptide occupies residues 1–15; sequence MKIILFLTLIALASC. Positions 16–81 constitute an X4e domain; the sequence is ELYHYQECVR…RHTYQLRARS (66 aa). Topologically, residues 16-96 are virion surface; sequence ELYHYQECVR…FIRQEEVHQE (81 aa). Cystine bridges form between C23-C58 and C35-C67. The helical transmembrane segment at 97-117 threads the bilayer; sequence LYSPLFLIVAALVFITLCFTI. Over 118–122 the chain is Intravirion; it reads KRKTE. The short motif at 118–122 is the Di-lysine motif element; sequence KRKTE.

In terms of assembly, interacts with the spike glycoprotein, M protein, E protein and the accessory protein 3.

Its subcellular location is the virion. It localises to the host endoplasmic reticulum membrane. The protein localises to the host endoplasmic reticulum-Golgi intermediate compartment membrane. The protein resides in the host Golgi apparatus membrane. Non-structural protein which is dispensable for virus replication in cell culture. This Bat coronavirus Rp3/2004 (BtCoV/Rp3/2004) protein is Protein 7a.